The chain runs to 389 residues: D(-)-tartrate dehydratase (389 aa).

Residues Asn21, Asn55, Lys102, Tyr156, Lys182, 182 to 184 (KMK), 213 to 215 (DAN), Glu239, Glu265, His322, and 341 to 343 (ESY) each bind substrate. Lys184 serves as the catalytic acceptor. 3 residues coordinate Mg(2+): Asp213, Glu239, and Glu265. The active-site Proton donor/acceptor is His322.

This sequence belongs to the mandelate racemase/muconate lactonizing enzyme family. In terms of assembly, homooctamer; tetramer of dimers. Mg(2+) serves as cofactor.

The enzyme catalyses (S,S)-tartrate = oxaloacetate + H2O. Catalyzes the dehydration of D-tartrate to oxaloacetate. The protein is D(-)-tartrate dehydratase (tarD) of Bradyrhizobium diazoefficiens (strain JCM 10833 / BCRC 13528 / IAM 13628 / NBRC 14792 / USDA 110).